Reading from the N-terminus, the 295-residue chain is Nicotinate-nucleotide pyrophosphorylase [carboxylating] (295 aa).

Substrate contacts are provided by residues Arg-107, 142-144 (TRK), Arg-166, Lys-176, Glu-206, Asp-227, and 256-258 (SGG).

Belongs to the NadC/ModD family. Hexamer formed by 3 homodimers.

Its subcellular location is the cytoplasm. The protein localises to the nucleus. The catalysed reaction is nicotinate beta-D-ribonucleotide + CO2 + diphosphate = quinolinate + 5-phospho-alpha-D-ribose 1-diphosphate + 2 H(+). Its pathway is cofactor biosynthesis; NAD(+) biosynthesis; nicotinate D-ribonucleotide from quinolinate: step 1/1. Its function is as follows. Involved in the catabolism of quinolinic acid (QA). This is Nicotinate-nucleotide pyrophosphorylase [carboxylating] (BNA6) from Saccharomyces cerevisiae (strain ATCC 204508 / S288c) (Baker's yeast).